The primary structure comprises 305 residues: Protein FdhE homolog (305 aa).

It belongs to the FdhE family.

The protein resides in the cytoplasm. Necessary for formate dehydrogenase activity. The protein is Protein FdhE homolog of Haemophilus ducreyi (strain 35000HP / ATCC 700724).